The chain runs to 209 residues: MSVPAVLAGIREAEAQAGRAAGTVRLVAVTKGHSLDEIRGQVLAHGDFPLAENRGQELRDKVAGLPGAEWHFIGPLQRNKIKYLRGVTLVHSIEEPWQAQAIADAAAEWGQAPAVLLQRHNGEGQKHGVLPDDLPAVLREVRATGLEVRGLMAMAPYDDEARAAQVFADTARQAQDLGLVELSMGMSGDYPLAVAAGATLVRVGRSLFA.

K31 is subject to N6-(pyridoxal phosphate)lysine.

It belongs to the pyridoxal phosphate-binding protein YggS/PROSC family.

In terms of biological role, pyridoxal 5'-phosphate (PLP)-binding protein, which is involved in PLP homeostasis. The sequence is that of Pyridoxal phosphate homeostasis protein from Deinococcus radiodurans (strain ATCC 13939 / DSM 20539 / JCM 16871 / CCUG 27074 / LMG 4051 / NBRC 15346 / NCIMB 9279 / VKM B-1422 / R1).